Here is a 192-residue protein sequence, read N- to C-terminus: Putative cyclic ADP-D-ribose synthase ThsB1 (192 aa).

Belongs to the Thoeris B TIR-like family. In terms of assembly, monomer; not seen to interact with ThsA.

It is found in the cytoplasm. Its activity is regulated as follows. Activated upon phage infection. TIR-like domain-containing component of the Thoeris antiviral defense system, composed of ThsA and ThsB. Expression of ThsA and ThsB in B.subtilis (strain BEST7003) confers resistance to phages SBSphiC, SBSphiJ and SPO1. Phage infection activates this protein so that 30 to 45 minutes post-infection with phage SPO1 it generates a signal molecule that in turn activates the NAD(+) hydrolase activity of ThsA. The signal is similar to cyclic ADP-D-ribose, but how it differs is unknown. In vitro purified (but unactivated) ThsB has no NAD(+) hydrolyzing activity, no activity on AMP, CMP, GMP or UMP, does not alter the activity of ThsA, does not bind DNA. Hydrolyzes NAD(+) to make a cyclic ADP-D-ribose (cADPR) signaling molecule; might make 3'cADPR. The chain is Putative cyclic ADP-D-ribose synthase ThsB1 from Bacillus cereus (strain MSX-D12).